Reading from the N-terminus, the 109-residue chain is MSQGIEFNRLMMDMKAMQMDAMSKPKSTSAVPEVAGSNFSDMLGQAINKVNDTQQASSQLANAFEIGKSGVDLTDVMIASQKASVSFQALTQVRNKLVQAYQDIMQMPV.

This sequence belongs to the FliE family.

It localises to the bacterial flagellum basal body. The chain is Flagellar hook-basal body complex protein FliE from Pseudomonas fluorescens (strain Pf0-1).